The sequence spans 454 residues: O-phospho-L-seryl-tRNA:Cys-tRNA synthase 2 (454 aa).

Residues 146 to 147 (AR), Asn251, and 274 to 276 (SGH) contribute to the pyridoxal 5'-phosphate site. Position 277 is an N6-(pyridoxal phosphate)lysine (Lys277).

Belongs to the SepCysS family. Homodimer. Interacts with SepRS. Pyridoxal 5'-phosphate serves as cofactor.

It catalyses the reaction O-phospho-L-seryl-tRNA(Cys) + hydrogen sulfide + H(+) = L-cysteinyl-tRNA(Cys) + phosphate. Its function is as follows. Converts O-phospho-L-seryl-tRNA(Cys) (Sep-tRNA(Cys)) to L-cysteinyl-tRNA(Cys) (Cys-tRNA(Cys)). The sequence is that of O-phospho-L-seryl-tRNA:Cys-tRNA synthase 2 from Methanoregula boonei (strain DSM 21154 / JCM 14090 / 6A8).